The following is a 65-amino-acid chain: Small, acid-soluble spore protein 2 (65 aa).

The protein belongs to the alpha/beta-type SASP family.

Functionally, SASP are bound to spore DNA. They are double-stranded DNA-binding proteins that cause DNA to change to an a-like conformation. They protect the DNA backbone from chemical and enzymatic cleavage and are thus involved in dormant spore's high resistance to UV light. The sequence is that of Small, acid-soluble spore protein 2 (sasP-2) from Bacillus cereus.